Here is a 444-residue protein sequence, read N- to C-terminus: Putative cytochrome P450 120 (444 aa).

Cys391 provides a ligand contact to heme.

This sequence belongs to the cytochrome P450 family. The cofactor is heme.

The protein is Putative cytochrome P450 120 (cyp120) of Synechocystis sp. (strain ATCC 27184 / PCC 6803 / Kazusa).